The following is a 470-amino-acid chain: ATP synthase subunit beta (470 aa).

Glycine 155–threonine 162 is a binding site for ATP.

Belongs to the ATPase alpha/beta chains family. In terms of assembly, F-type ATPases have 2 components, CF(1) - the catalytic core - and CF(0) - the membrane proton channel. CF(1) has five subunits: alpha(3), beta(3), gamma(1), delta(1), epsilon(1). CF(0) has three main subunits: a(1), b(2) and c(9-12). The alpha and beta chains form an alternating ring which encloses part of the gamma chain. CF(1) is attached to CF(0) by a central stalk formed by the gamma and epsilon chains, while a peripheral stalk is formed by the delta and b chains.

The protein localises to the cell membrane. The enzyme catalyses ATP + H2O + 4 H(+)(in) = ADP + phosphate + 5 H(+)(out). Produces ATP from ADP in the presence of a proton gradient across the membrane. The catalytic sites are hosted primarily by the beta subunits. The sequence is that of ATP synthase subunit beta from Staphylococcus haemolyticus (strain JCSC1435).